We begin with the raw amino-acid sequence, 259 residues long: Insulin-like growth factor-binding protein 4 (259 aa).

The signal sequence occupies residues M1 to G22. An IGFBP N-terminal domain is found at E24–L104. Intrachain disulfides connect C28/C54, C31/C56, C39/C57, C45/C60, C68/C81, and C75/C101. A disordered region spans residues Q115–D136. The N-linked (GlcNAc...) asparagine glycan is linked to N126. 4 disulfides stabilise this stretch: C132–C139, C175–C205, C216–C227, and C229–C250. Positions Q172–C250 constitute a Thyroglobulin type-1 domain. S256 carries the phosphoserine modification.

Binds IGF2 more than IGF1.

The protein resides in the secreted. Functionally, IGF-binding proteins prolong the half-life of the IGFs and have been shown to either inhibit or stimulate the growth promoting effects of the IGFs on cell culture. They alter the interaction of IGFs with their cell surface receptors. In Sus scrofa (Pig), this protein is Insulin-like growth factor-binding protein 4 (IGFBP4).